The sequence spans 282 residues: Nucleotide-binding protein XCC2806 (282 aa).

5 to 12 provides a ligand contact to ATP; that stretch reads GLSGSGKS. 57–60 serves as a coordination point for GTP; it reads DVRS.

Belongs to the RapZ-like family.

Functionally, displays ATPase and GTPase activities. This chain is Nucleotide-binding protein XCC2806, found in Xanthomonas campestris pv. campestris (strain ATCC 33913 / DSM 3586 / NCPPB 528 / LMG 568 / P 25).